The following is a 282-amino-acid chain: Elongation factor Ts (282 aa).

Residues 79-82 (TDFV) are involved in Mg(2+) ion dislocation from EF-Tu.

Belongs to the EF-Ts family.

The protein localises to the cytoplasm. Associates with the EF-Tu.GDP complex and induces the exchange of GDP to GTP. It remains bound to the aminoacyl-tRNA.EF-Tu.GTP complex up to the GTP hydrolysis stage on the ribosome. This chain is Elongation factor Ts, found in Shewanella sediminis (strain HAW-EB3).